We begin with the raw amino-acid sequence, 3712 residues long: Laminin subunit alpha (3712 aa).

The first 22 residues, 1–22, serve as a signal peptide directing secretion; the sequence is MGHGVASIGALLVILAISYCQA. The region spanning 23-272 is the Laminin N-terminal domain; sequence ELTPPYFNLA…SIKDISIGGR (250 aa). Residues N116 and N219 are each glycosylated (N-linked (GlcNAc...) asparagine). 43 disulfide bridges follow: C273/C282, C275/C296, C298/C307, C310/C330, C333/C342, C335/C367, C370/C379, C382/C400, C403/C414, C405/C421, C423/C432, C435/C445, C448/C460, C450/C468, C470/C479, C482/C492, C495/C507, C497/C514, C516/C525, C528/C538, C541/C553, C543/C560, C562/C571, C574/C584, C587/C599, C589/C605, C607/C616, C619/C629, C632/C644, C634/C650, C652/C661, C664/C674, C677/C691, C679/C700, C702/C711, C714/C729, C732/C746, C734/C753, C755/C764, C767/C782, C785/C797, C787/C804, and C806/C815. 10 Laminin EGF-like domains span residues 273-332, 333-402, 403-447, 448-494, 495-540, 541-586, 587-631, 632-676, 677-731, and 732-784; these read CMCN…NCEP, CNCH…VCSP, CQCD…NCRE, CECN…ECKA, CECN…TCSY, CDCD…DCKP, CNCS…DCLP, CHCD…SCED, CNCD…GCEI, and CDCW…GCKD. N-linked (GlcNAc...) asparagine glycosylation occurs at N395. The N-linked (GlcNAc...) asparagine glycan is linked to N453. An N-linked (GlcNAc...) asparagine glycan is attached at N508. N-linked (GlcNAc...) asparagine glycosylation is present at N588. N722 carries N-linked (GlcNAc...) asparagine glycosylation. In terms of domain architecture, Laminin EGF-like 11; truncated spans 785–815; sequence CSCDVGGSWQSVCDKISGQCKCHPRITGLAC. A domain IV'' region spans residues 816–1374; that stretch reads TQPLTTHFFP…TADYNSGALP (559 aa). N897 and N1352 each carry an N-linked (GlcNAc...) asparagine glycan. 16 disulfide bridges follow: C1375–C1387, C1377–C1394, C1396–C1405, C1408–C1418, C1421–C1429, C1423–C1436, C1438–C1447, C1450–C1463, C1466–C1480, C1468–C1487, C1489–C1498, C1501–C1511, C1514–C1526, C1516–C1533, C1535–C1544, and C1547–C1562. 4 Laminin EGF-like domains span residues 1375 to 1420, 1421 to 1465, 1466 to 1513, and 1514 to 1564; these read CNCD…DCKP, CKCP…GCEE, CACN…HCEQ, and CSCH…GCTT. A glycan (N-linked (GlcNAc...) asparagine) is linked at N1484. Positions 1565–1574 constitute a Laminin EGF-like 16; first part domain; it reads CFCFGKTSRC. N-linked (GlcNAc...) asparagine glycans are attached at residues N1583 and N1617. A Laminin IV type A domain is found at 1585–1775; sequence SLLKHVSITT…GEYQFLAVER (191 aa). One can recognise a Laminin EGF-like 16; second part domain in the interval 1776-1808; it reads CSCPPGYSGHSCEDCAPGYYRDPSGPYGGYCIP. Intrachain disulfides connect C1778-C1787, C1790-C1806, C1809-C1818, C1811-C1825, C1828-C1837, C1840-C1856, C1859-C1874, C1861-C1885, C1887-C1896, C1899-C1914, C1917-C1931, C1919-C1938, C1941-C1950, C1953-C1967, C1970-C1980, C1972-C1987, C1989-C1998, C2001-C2014, C2017-C2028, C2019-C2035, C2037-C2046, C2049-C2061, C2064-C2076, C2066-C2083, C2085-C2094, and C2097-C2109. Laminin EGF-like domains follow at residues 1809 to 1858, 1859 to 1916, 1917 to 1969, 1970 to 2016, 2017 to 2063, and 2064 to 2111; these read CECN…DCMI, CACP…VCKP, CECS…NCQS, CDCD…GCRA, CDCG…GCTP, and CNCN…GCQE. N1847 carries N-linked (GlcNAc...) asparagine glycosylation. An N-linked (GlcNAc...) asparagine glycan is attached at N1943. N-linked (GlcNAc...) asparagine glycosylation is present at N2024. The interval 2112-2671 is domain II and I; that stretch reads CNNCHHALLD…EAARQLANSI (560 aa). A coiled-coil region spans residues 2178-2249; it reads KKANSELESD…LSKNLEAAAS (72 aa). N-linked (GlcNAc...) asparagine glycosylation is found at N2196, N2215, N2267, N2301, and N2323. A coiled-coil region spans residues 2301–2321; that stretch reads NKSLNALKNDIGEFSDHLEDL. Positions 2376-2450 form a coiled coil; the sequence is DLTLNQINQK…QYTDMTASAE (75 aa). N-linked (GlcNAc...) asparagine glycans are attached at residues N2482, N2524, N2538, N2569, N2699, N2720, N2890, N2938, and N3010. Positions 2541–2676 form a coiled coil; sequence EHQLKDINKL…LANSIKVGVN (136 aa). 3 Laminin G-like domains span residues 2672–2868, 2876–3048, and 3055–3223; these read KVGV…ERDV, VTGL…EEGC, and VVSY…INGC. Residues C3022 and C3048 are joined by a disulfide bond. N-linked (GlcNAc...) asparagine glycosylation is present at N3070. Residues C3196 and C3223 are joined by a disulfide bond. The interval 3244-3297 is disordered; that stretch reads NEVESPWSNADTLPPLKPDIESTLPPTTPTTTTTTTTTTTSTTTTSTTTTTTTP. Positions 3265–3297 are enriched in low complexity; it reads STLPPTTPTTTTTTTTTTTSTTTTSTTTTTTTP. 2 Laminin G-like domains span residues 3349-3528 and 3534-3709; these read GYRF…VVPC and RGLF…QGYC. An N-linked (GlcNAc...) asparagine glycan is attached at N3491. Residues C3505 and C3528 are joined by a disulfide bond. N3612 carries N-linked (GlcNAc...) asparagine glycosylation. An intrachain disulfide couples C3682 to C3709.

In terms of assembly, laminin is a complex glycoprotein, consisting of three different polypeptide chains (alpha, beta, gamma), which are bound to each other by disulfide bonds into a cross-shaped molecule comprising one long and three short arms with globules at each end. In terms of tissue distribution, newly formed mesoderm and later prominently expressed in hemocytes, which also synthesize collagen IV. Expressed in muscles.

The protein localises to the secreted. It is found in the extracellular space. It localises to the extracellular matrix. Its subcellular location is the basement membrane. The protein resides in the synapse. The protein localises to the cell projection. It is found in the axon. It localises to the cytoplasmic vesicle. Its subcellular location is the secretory vesicle. The protein resides in the synaptic vesicle. Binding to cells via a high affinity receptor, laminin is thought to mediate the attachment, migration and organization of cells into tissues during embryonic development by interacting with other extracellular matrix components. Activates presynaptic signaling involving integrin alpha-PS3/beta-nu and Fak to suppress neuromuscular junction (NMJ) growth during larval development and during low crawling activity, but not during higher-crawling conditions. Mediates, together with integrin alpha-PS3/beta-nu, glutamate receptor-modulated NMJ growth. The sequence is that of Laminin subunit alpha (LanA) from Drosophila melanogaster (Fruit fly).